The following is a 339-amino-acid chain: UDP-N-acetylglucosamine/UDP-N-acetylgalactosamine transporter nstp-4 (339 aa).

Helical transmembrane passes span 44–64, 94–114, 148–168, 186–206, 224–244, 255–275, 281–301, and 305–325; these read LSST…FFVI, LKVA…FFAL, YNWM…YPSG, ILGL…GVYF, LAFF…WQAI, GVIW…ALVV, ILKG…SWLV, and LTIT…TFLY.

Belongs to the nucleotide-sugar transporter family. SLC35A subfamily. Widely expressed, including in pharynx and pharyngeal gland cells, seam cells, spermatheca, stomatointestinal muscle, vulva, and body wall muscle.

The protein resides in the golgi apparatus membrane. In terms of biological role, uridine diphosphate-N-acetylglucosamine (UDP-GlcNAc) transporter in the Golgi apparatus. UDP-N-acetylgalactosamine (UDP-GalNAc) transporter in the Golgi apparatus. Apparently transports UDP-GlcNAc and UDP-GalNAc simultaneously, and independently, by an unknown mechanism. Functions redundantly with nucleotide sugar transporter srf-3. May be involved in gonadal development. In Caenorhabditis elegans, this protein is UDP-N-acetylglucosamine/UDP-N-acetylgalactosamine transporter nstp-4.